The chain runs to 453 residues: Tubulin delta chain (453 aa).

143 to 149 (AGGTGSG) provides a ligand contact to GTP.

It belongs to the tubulin family. In terms of assembly, found in a complex with TEDC1, TEDC2, TUBE1 and TUBD1.

The protein resides in the nucleus. It localises to the cytoplasm. It is found in the cytoskeleton. Its subcellular location is the microtubule organizing center. The protein localises to the centrosome. The protein resides in the centriole. It localises to the cell projection. It is found in the cilium. Its function is as follows. Acts as a positive regulator of hedgehog signaling and regulates ciliary function. This Homo sapiens (Human) protein is Tubulin delta chain (TUBD1).